We begin with the raw amino-acid sequence, 1040 residues long: Exosome RNA helicase MTR4 (1040 aa).

An N-acetylalanine modification is found at Ala2. The interval 16 to 77 (DSTSAAGAKK…GTDEPIFGKK (62 aa)) is disordered. A compositionally biased stretch (basic and acidic residues) spans 23–33 (AKKDKEKEKWK). Lys24 is covalently cross-linked (Glycyl lysine isopeptide (Lys-Gly) (interchain with G-Cter in SUMO2)). Ser38 bears the Phosphoserine mark. A compositionally biased stretch (basic and acidic residues) spans 41–50 (KAGKRLDTKL). 2 positions are modified to N6-acetyllysine: Lys49 and Lys76. ATP-binding positions include Ile137, 159–166 (AHTSAGKT), Ser162, Gly164, Lys165, and Thr166. The Helicase ATP-binding domain maps to 146 to 302 (IQCVDNNQSV…WICHLHKQPC (157 aa)). Residues 250-253 (DEIH) carry the DEIH box motif. Residue Lys356 forms a Glycyl lysine isopeptide (Lys-Gly) (interchain with G-Cter in SUMO2) linkage. A Helicase C-terminal domain is found at 403–575 (QMTKLDFNTD…NMVLNLLRVE (173 aa)). Residues Lys682 and Lys721 each participate in a glycyl lysine isopeptide (Lys-Gly) (interchain with G-Cter in SUMO2) cross-link.

Belongs to the helicase family. SKI2 subfamily. As to quaternary structure, component of a TRAMP-like complex, an ATP-dependent exosome regulatory complex consisting of a helicase (MTREX), an oligadenylate polymerase (TENT4B or TENT4A), and a substrate specific RNA-binding factor (ZCCHC7 or ZCCHC8). Several TRAMP-like complexes exist with specific compositions and are associated with nuclear, or nucleolar RNA exosomes. Identified in the spliceosome C complex. Component of the poly(A) tail exosome targeting (PAXT) complex made of PABPN1, ZFC3H1 and MTREX that directs a subset of long and polyadenylated poly(A) RNAs for exosomal degradation. Component of the nuclear exosome targeting (NEXT) complex composed of MTREX, ZCCHC8, and RBM7 that directs a subset of non-coding short-lived RNAs for exosomal degradation. Interacts with ZCCHC8; this interaction bridges the interaction between RBM7 and MTREX. Binds to ZFC3H1 and RBM7 in a RNase-insensitive manner. Interacts with EXOSC10; the interaction mediates the association of MTREX with nuclear RNA exosomes. Interacts with isoform 1 of NVL in an ATP-dependent manner; the interaction is required to associate NVL with nuclear RNA exosome. Interacts with WDR74; the interaction dissociation in a late stage of rRNA synthesis is required for appropriate maturation of pre-60S particles and depends on the ATPase activity of NVL. Interacts with MPHOSPH6. Interacts with the RNA cap-binding complex proteins NCBP1 and SRRT. Interacts with NRDE2; the interaction is direct and negatively regulates MTREX function in exosomal degradation by changing its conformation precluding interaction with ZFC3H1, the RNA cap-binding complex proteins NCBP1 and SRRT, and association with the exosome. Associates with the RNA exosome complex.

The protein localises to the nucleus. It localises to the nucleoplasm. It is found in the nucleolus. The protein resides in the nucleus speckle. It catalyses the reaction ATP + H2O = ADP + phosphate + H(+). With respect to regulation, activated when MTREX is incorporated into NEXT complex an the nuclear RNA exosome complex. Functionally, catalyzes the ATP-dependent unwinding of RNA duplexes with a single-stranded 3' RNA extension. Central subunit of many protein complexes, namely TRAMP-like, nuclear exosome targeting (NEXT) and poly(A) tail exosome targeting (PAXT). NEXT functions as an RNA exosome cofactor that directs a subset of non-coding short-lived RNAs for exosomal degradation. NEXT is involved in surveillance and turnover of aberrant transcripts and non-coding RNAs. PAXT directs a subset of long and polyadenylated poly(A) RNAs for exosomal degradation. The RNA exosome is fundamental for the degradation of RNA in eukaryotic nuclei. Substrate targeting is facilitated by its cofactor ZCCHC8, which links to RNA-binding protein adapters. Associated with the RNA exosome complex and involved in the 3'-processing of the 7S pre-RNA to the mature 5.8S rRNA. May be involved in pre-mRNA splicing. In the context of NEXT complex can also in vitro unwind DNA:RNA heteroduplexes with a 3' poly (A) RNA tracking strand. Can promote unwinding and degradation of structured RNA substrates when associated with the nuclear exosome and its cofactors. Can displace a DNA strand while translocating on RNA to ultimately degrade the RNA within a DNA/RNA heteroduplex. Plays a role in DNA damage response. In Mus musculus (Mouse), this protein is Exosome RNA helicase MTR4.